Here is a 649-residue protein sequence, read N- to C-terminus: Lipoteichoic acid synthase 2 (649 aa).

Residues 1-9 (MKTFIKERG) are Cytoplasmic-facing. Residues 10 to 30 (LAFFLIAVVLLWIKTYVGYVL) form a helical membrane-spanning segment. The Extracellular segment spans residues 31-42 (NFNLGIDNTIQK). A helical membrane pass occupies residues 43–63 (ILLFVNPLSSSLFFLGFGLLF). Residues 64–69 (KKKLQQ) are Cytoplasmic-facing. A helical transmembrane segment spans residues 70 to 90 (TAIIVIHFLMSFLLYANIVYY). Topologically, residues 91–118 (RFFNDFITIPVIMQAKTNGGQLGDSAFS) are extracellular. A helical membrane pass occupies residues 119–139 (LMRPTDAFYFIDTIILIILAI). The Cytoplasmic segment spans residues 140–151 (KVNKPAETSSKK). Residues 152–172 (SFRIIFASSILVFLINLAVAE) traverse the membrane as a helical segment. Residues 173 to 649 (SDRPELLTRS…SETSKDNEDK (477 aa)) are Extracellular-facing. The Mn(2+) site is built by glutamate 253 and threonine 297. Residue threonine 297 is part of the active site. Position 412 (histidine 412) interacts with substrate. Mn(2+) is bound by residues aspartate 471 and histidine 472. The tract at residues 622-649 (FKKVNPSDYDYTKHDEDSSETSKDNEDK) is disordered. The segment covering 631–649 (DYTKHDEDSSETSKDNEDK) has biased composition (basic and acidic residues).

This sequence belongs to the LTA synthase family. Post-translationally, proteolytically cleaved.

The protein localises to the cell membrane. It is found in the secreted. It participates in cell wall biogenesis; lipoteichoic acid biosynthesis. Catalyzes the polymerization of lipoteichoic acid (LTA) polyglycerol phosphate, a reaction that presumably uses phosphatidylglycerol (PG) as substrate. In Bacillus subtilis (strain 168), this protein is Lipoteichoic acid synthase 2 (ltaS2).